The sequence spans 520 residues: Arginine biosynthesis bifunctional protein ArgJ, chloroplastic (520 aa).

Thr264, Lys290, Thr301, Glu388, Asn515, and Thr520 together coordinate substrate. Thr301 functions as the Nucleophile in the catalytic mechanism.

The protein belongs to the ArgJ family. In terms of assembly, heterodimer of an alpha and a beta chain.

The protein localises to the plastid. Its subcellular location is the chloroplast. It catalyses the reaction N(2)-acetyl-L-ornithine + L-glutamate = N-acetyl-L-glutamate + L-ornithine. The catalysed reaction is L-glutamate + acetyl-CoA = N-acetyl-L-glutamate + CoA + H(+). It participates in amino-acid biosynthesis; L-arginine biosynthesis; L-ornithine and N-acetyl-L-glutamate from L-glutamate and N(2)-acetyl-L-ornithine (cyclic): step 1/1. Its pathway is amino-acid biosynthesis; L-arginine biosynthesis; N(2)-acetyl-L-ornithine from L-glutamate: step 1/4. Its function is as follows. Catalyzes two activities which are involved in the cyclic version of arginine biosynthesis: the synthesis of acetylglutamate from glutamate and acetyl-CoA, and of ornithine by transacetylation between acetylornithine and glutamate. In Physcomitrium patens (Spreading-leaved earth moss), this protein is Arginine biosynthesis bifunctional protein ArgJ, chloroplastic.